We begin with the raw amino-acid sequence, 180 residues long: Large ribosomal subunit protein uL18m (180 aa).

This sequence belongs to the universal ribosomal protein uL18 family. In terms of assembly, component of the mitochondrial ribosome large subunit (39S) which comprises a 16S rRNA and about 50 distinct proteins.

It is found in the mitochondrion. Its function is as follows. Together with thiosulfate sulfurtransferase (TST), acts as a mitochondrial import factor for the cytosolic 5S rRNA. The precursor form shows RNA chaperone activity; is able to fold the 5S rRNA into an import-competent conformation that is recognized by rhodanese (TST). Both the cytoplasmic and mitochondrial forms are able to bind to the helix IV-loop D in the gamma domain of the 5S rRNA. This is Large ribosomal subunit protein uL18m (MRPL18) from Bos taurus (Bovine).